The primary structure comprises 975 residues: E3 ubiquitin-protein ligase BRE1A (975 aa).

The tract at residues 1–30 is disordered; it reads MSGIGNKRAAGEPGTSMPPEKKAAVEDSGT. Lys-21 carries the N6-acetyllysine modification. Position 41 is a phosphoserine (Ser-41). Positions 43 to 90 form a coiled coil; the sequence is TEELDIRTLQTKNRKLAEMLDQRQAIEDELREHIEKLERRQATDDASL. Positions 125–155 are disordered; that stretch reads KALVVPEPEPDSDSNQERKDDRERGEGQEPA. Phosphoserine occurs at positions 136 and 138. The span at 139–151 shows a compositional bias: basic and acidic residues; it reads NQERKDDRERGEG. Coiled coils occupy residues 168–375 and 429–898; these read EEME…EQVV and SLHK…TTKK. An N6-acetyllysine mark is found at Lys-348 and Lys-510. The disordered stretch occupies residues 507-622; it reads DLNKTRLRSG…GKHDDGRKKE (116 aa). Position 522 is a phosphoserine (Ser-522). The span at 527–540 shows a compositional bias: basic and acidic residues; sequence EDPKDEPAELKPDS. A compositionally biased stretch (low complexity) spans 543 to 552; sequence LSSQSSASKA. Residues 558 to 622 show a composition bias toward basic and acidic residues; that stretch reads NEIKSKRDEE…GKHDDGRKKE (65 aa). Ser-562 bears the Phosphoserine mark. The segment at 922-961 adopts an RING-type zinc-finger fold; sequence CPCCNMRKKDAVLTKCFHVFCFECVKTRYDTRQRKCPKCN.

It belongs to the BRE1 family. Component of the RNF20/40 complex (also known as BRE1 complex) probably composed of 2 copies of RNF20/BRE1A and 2 copies of RNF40/BRE1B. Interacts with UBE2E1/UBCH6. Interacts with p53/TP53 and WAC. Interacts with PAF1; the interaction mediates the association of the PAF1 and RNF20/40 complexes which is a prerequsite for recruitment of UBE2A/B. Interacts with isoform 1 and isoform 2 of PA2G4. Interacts with FBXL19. As to quaternary structure, (Microbial infection) Interacts with human herpesvirus 8 (KSHV) protein RTA/ORF50; this interaction targets the SMC5-SMC6 complex for proteasomal degradation. As to expression, expressed in the normal brain and also in malignant gliomas (at protein level).

The protein resides in the nucleus. It carries out the reaction S-ubiquitinyl-[E2 ubiquitin-conjugating enzyme]-L-cysteine + [acceptor protein]-L-lysine = [E2 ubiquitin-conjugating enzyme]-L-cysteine + N(6)-ubiquitinyl-[acceptor protein]-L-lysine.. The protein operates within protein modification; protein ubiquitination. Its function is as follows. Component of the RNF20/40 E3 ubiquitin-protein ligase complex that mediates monoubiquitination of 'Lys-120' of histone H2B (H2BK120ub1). H2BK120ub1 gives a specific tag for epigenetic transcriptional activation and is also prerequisite for histone H3 'Lys-4' and 'Lys-79' methylation (H3K4me and H3K79me, respectively). It thereby plays a central role inb histone code and gene regulation. The RNF20/40 complex forms a H2B ubiquitin ligase complex in cooperation with the E2 enzyme UBE2A or UBE2B; reports about the cooperation with UBE2E1/UBCH are contradictory. Required for transcriptional activation of Hox genes. Recruited to the MDM2 promoter, probably by being recruited by p53/TP53, and thereby acts as a transcriptional coactivator. Mediates the polyubiquitination of isoform 2 of PA2G4 in cancer cells leading to its proteasome-mediated degradation. (Microbial infection) Promotes the human herpesvirus 8 (KSHV) lytic cycle by inducing the expression of lytic viral genes including the latency switch gene RTA/ORF50. This is E3 ubiquitin-protein ligase BRE1A (RNF20) from Homo sapiens (Human).